The primary structure comprises 545 residues: Chaperonin GroEL (545 aa).

ATP contacts are provided by residues 30–33 (TLGP), lysine 51, 87–91 (DGTTT), glycine 413, 477–479 (NAA), and aspartate 493.

It belongs to the chaperonin (HSP60) family. In terms of assembly, forms a cylinder of 14 subunits composed of two heptameric rings stacked back-to-back. Interacts with the co-chaperonin GroES.

The protein resides in the cytoplasm. It catalyses the reaction ATP + H2O + a folded polypeptide = ADP + phosphate + an unfolded polypeptide.. Functionally, together with its co-chaperonin GroES, plays an essential role in assisting protein folding. The GroEL-GroES system forms a nano-cage that allows encapsulation of the non-native substrate proteins and provides a physical environment optimized to promote and accelerate protein folding. This chain is Chaperonin GroEL, found in Pseudomonas putida (Arthrobacter siderocapsulatus).